The sequence spans 497 residues: Probable malate:quinone oxidoreductase (497 aa).

This sequence belongs to the MQO family. FAD is required as a cofactor.

It carries out the reaction (S)-malate + a quinone = a quinol + oxaloacetate. The protein operates within carbohydrate metabolism; tricarboxylic acid cycle; oxaloacetate from (S)-malate (quinone route): step 1/1. This chain is Probable malate:quinone oxidoreductase, found in Tolumonas auensis (strain DSM 9187 / NBRC 110442 / TA 4).